The primary structure comprises 735 residues: Ion-translocating oxidoreductase complex subunit C (735 aa).

2 consecutive 4Fe-4S ferredoxin-type domains span residues 368–397 (MGAPQEEKSCIRCSACADACPADLLPQQLY) and 407–436 (KATAHHIADCIECGACAWVCPSNIPLVQYF). [4Fe-4S] cluster-binding residues include Cys377, Cys380, Cys383, Cys387, Cys416, Cys419, Cys422, and Cys426. A disordered region spans residues 538-715 (KQAAHPMADS…PADPRKAAVA (178 aa)). Residues 556-565 (KAAVEAAIAR) are compositionally biased toward low complexity.

Belongs to the 4Fe4S bacterial-type ferredoxin family. RnfC subfamily. The complex is composed of six subunits: RsxA, RsxB, RsxC, RsxD, RsxE and RsxG. The cofactor is [4Fe-4S] cluster.

Its subcellular location is the cell inner membrane. Part of a membrane-bound complex that couples electron transfer with translocation of ions across the membrane. Required to maintain the reduced state of SoxR. This Salmonella typhimurium (strain LT2 / SGSC1412 / ATCC 700720) protein is Ion-translocating oxidoreductase complex subunit C.